We begin with the raw amino-acid sequence, 1252 residues long: MFKCPERVSVKKKEDILDLPNLIEIQIKSYKQFLQIGKLAEERDNVGLEEVFREIFPIKSYNEATILEYLSYNLGVPKYSPEECIRRGITYSVTLKVRFRLTDETGIKEEEVYMGTIPIMTDKGTFIINGAERVIVSQVHRSPGINFEQEKHSKGNILFSFRIIPYRGSWLEAIFDINDLIYIHIDRKKRRRKILAMTFIRALGYSSDADIIEEFFQIEERSLKSEKDFTLLVGKILADNVLDESSSLVYGKAGEKLSTAMLKRMLDADISTLKIAVEADENHPIIKMLAKDPTDSYEAALKDFYRRLRPGEPATLANARSTIMRLFFDSKRYNLGRVGRYKLNRKLGFPMDEETLSQVTLRKEDVIGALKYLIRLKMGDERASIDDIDHLANRRVRSVGELIQNQCRSGLARMEKIVRERMNLFDFSSDTLIPGKIISAKGLASVLKDFFGRSQLSQFMDQTNPVAELTHKRRLSALGPGGLNRERAGFEVRDVHASHYGRICPIETPEGPNIGLITSLSSFAKINEFGFIETPYRIVRDGVVTDEIEYMTADVEEECVIAQASAALDEYNMFVDPVCWARCRGEAFEADTSTVTHMDVSPKQLVSIVTGLIPFLEHDDANRALMGSNMQRQAVPLLKTEAPIVGTGLEARAAKDSGAIVVAEEDGVVDYVDGYKVVIAPKHNPTLKRTYDLKKFLRSNSGTCINQRPLCSVGDVIVKGDVIADGPATDQGELALGKNILVAFMPWYGYNFEDAIIISEKLIKQDAYTSIYIEEFELTARDTKLGKEEITRDIPNVSEEVLANLGEDGIIRIGAEVKPGDILVGKITPKSETELAPEERLLRAIFGEKAADVKDASLTVPPGTEGVVMDVKVFSRKDRLSKSDDELVEEAVHLKDLQKGYKNQVSVLKTEYREKLGALLLNEKAPASIIHRRTADILVQEGTVFDQETIELLEQESLVDLLMPPCEMYDVLKGLLSDYETSLQRLEVNYKTEVEHIREGDADLDHGVIRQVKVYVASKRKLQVGDKMAGRHGNKGVVSKIVPEADMPYLANGETVQMILNPLGVPSRMNLGQVLETHLGYAAKTAGIHVKTPVFEGFPESRIWDMMIEQGLPADGKSYLYDGKTGERFDNTVVIGYIYMLKLSHLIADKIHARSIGPYSLVTQQPLGGKAQMGGQRFGEMEVWALEAYGVAHMLQEILTVKSDDVSGRTRIYESIVKGENLLKSGTPESFNVLIKEMQGLGLDVRPMVVDA.

The protein belongs to the RNA polymerase beta chain family. As to quaternary structure, the RNAP catalytic core consists of 2 alpha, 1 beta, 1 beta' and 1 omega subunit. When a sigma factor is associated with the core the holoenzyme is formed, which can initiate transcription.

It carries out the reaction RNA(n) + a ribonucleoside 5'-triphosphate = RNA(n+1) + diphosphate. Its function is as follows. DNA-dependent RNA polymerase catalyzes the transcription of DNA into RNA using the four ribonucleoside triphosphates as substrates. The protein is DNA-directed RNA polymerase subunit beta of Chlamydia caviae (strain ATCC VR-813 / DSM 19441 / 03DC25 / GPIC) (Chlamydophila caviae).